Reading from the N-terminus, the 135-residue chain is Ribonuclease P protein component (135 aa).

It belongs to the RnpA family. In terms of assembly, consists of a catalytic RNA component (M1 or rnpB) and a protein subunit.

It carries out the reaction Endonucleolytic cleavage of RNA, removing 5'-extranucleotides from tRNA precursor.. RNaseP catalyzes the removal of the 5'-leader sequence from pre-tRNA to produce the mature 5'-terminus. It can also cleave other RNA substrates such as 4.5S RNA. The protein component plays an auxiliary but essential role in vivo by binding to the 5'-leader sequence and broadening the substrate specificity of the ribozyme. The polypeptide is Ribonuclease P protein component (Pseudomonas paraeruginosa (strain DSM 24068 / PA7) (Pseudomonas aeruginosa (strain PA7))).